We begin with the raw amino-acid sequence, 315 residues long: L-lactate dehydrogenase (315 aa).

V14, D35, and Y66 together coordinate NAD(+). Residues Q83, R89, and 121–124 (NPVD) contribute to the substrate site. NAD(+) contacts are provided by residues 119–121 (VAN) and S144. Residue 149 to 152 (DTAR) participates in substrate binding. The Proton acceptor role is filled by H176. At Y221 the chain carries Phosphotyrosine. T230 is a substrate binding site.

It belongs to the LDH/MDH superfamily. LDH family. Homotetramer.

Its subcellular location is the cytoplasm. The catalysed reaction is (S)-lactate + NAD(+) = pyruvate + NADH + H(+). Its pathway is fermentation; pyruvate fermentation to lactate; (S)-lactate from pyruvate: step 1/1. Its function is as follows. Catalyzes the conversion of lactate to pyruvate. The polypeptide is L-lactate dehydrogenase (Mesomycoplasma hyopneumoniae (strain 7448) (Mycoplasma hyopneumoniae)).